A 187-amino-acid polypeptide reads, in one-letter code: Peptide deformylase (187 aa).

Residues Cys-107 and His-149 each contribute to the Fe cation site. Glu-150 is an active-site residue. Fe cation is bound at residue His-153.

It belongs to the polypeptide deformylase family. It depends on Fe(2+) as a cofactor.

The catalysed reaction is N-terminal N-formyl-L-methionyl-[peptide] + H2O = N-terminal L-methionyl-[peptide] + formate. In terms of biological role, removes the formyl group from the N-terminal Met of newly synthesized proteins. Requires at least a dipeptide for an efficient rate of reaction. N-terminal L-methionine is a prerequisite for activity but the enzyme has broad specificity at other positions. The chain is Peptide deformylase from Picosynechococcus sp. (strain ATCC 27264 / PCC 7002 / PR-6) (Agmenellum quadruplicatum).